The chain runs to 292 residues: Homoserine kinase (292 aa).

84-94 (PLARGMGSSSA) provides a ligand contact to ATP.

This sequence belongs to the GHMP kinase family. Homoserine kinase subfamily.

The protein localises to the cytoplasm. It carries out the reaction L-homoserine + ATP = O-phospho-L-homoserine + ADP + H(+). The protein operates within amino-acid biosynthesis; L-threonine biosynthesis; L-threonine from L-aspartate: step 4/5. In terms of biological role, catalyzes the ATP-dependent phosphorylation of L-homoserine to L-homoserine phosphate. This is Homoserine kinase from Thermus thermophilus (strain ATCC 27634 / DSM 579 / HB8).